A 78-amino-acid chain; its full sequence is RNA-binding protein Hfq (78 aa).

The Sm domain occupies 10 to 69 (DPFLNALRKEHVPVSIYLVNGIKLQGHIESFDQYVVLLRNTVTQMVYKHAISTVVPARAV).

This sequence belongs to the Hfq family. Homohexamer.

In terms of biological role, RNA chaperone that binds small regulatory RNA (sRNAs) and mRNAs to facilitate mRNA translational regulation in response to envelope stress, environmental stress and changes in metabolite concentrations. Also binds with high specificity to tRNAs. The chain is RNA-binding protein Hfq from Herminiimonas arsenicoxydans.